Consider the following 328-residue polypeptide: MADNTGSEMKSGSFMLEKSAKIFVAGHRGLVGSAIVRKLQDQGFTNLVLRTHSELDLTSQSDVESFFATEKPVYVILAAAKVGGIHANNTYPADFIGVNLQIQTNVIHSAYTHGVKKLLFLGSSCIYPKFAPQPIPESALLTGPLEPTNEWYAIAKIAGIKMCQAYRLQHQWDAISGMPTNLYGQNDNFHPENSHVLPALMRRFHEAKANNADEVVVWGSGSPLREFLHVDDLADACVFLMDQYSGFEHVNVGSGVEVTIKELAELVKEVVGFKGKLVWDTTKPDGTPRKLMDSSKLASLGWTPKISLKDGLSQTYEWYLENVVQKKQ.

Residue alanine 2 is modified to N-acetylalanine. Position 26–32 (26–32 (GHRGLVG)) interacts with NADP(+). Tyrosine 152 (proton donor/acceptor) is an active-site residue. Residues lysine 156, 179–182 (PTNL), and histidine 195 each bind NADP(+). Substrate-binding residues include arginine 203, tryptophan 218, arginine 225, and aspartate 285.

It belongs to the NAD(P)-dependent epimerase/dehydratase family. Fucose synthase subfamily. In terms of assembly, homodimer.

The enzyme catalyses GDP-beta-L-fucose + NADP(+) = GDP-4-dehydro-alpha-D-rhamnose + NADPH + H(+). The protein operates within nucleotide-sugar biosynthesis; GDP-L-fucose biosynthesis via de novo pathway; GDP-L-fucose from GDP-alpha-D-mannose: step 2/2. In terms of biological role, catalyzes the two-step NADP-dependent conversion of GDP-4-dehydro-6-deoxy-D-mannose to GDP-fucose, involving an epimerase and a reductase reaction. The protein is Putative GDP-L-fucose synthase 2 (GER2) of Arabidopsis thaliana (Mouse-ear cress).